The sequence spans 118 residues: Probable mitochondrial pyruvate carrier 2 (118 aa).

The next 3 membrane-spanning stretches (helical) occupy residues 19–35 (VHFW…LSGI), 50–66 (YAAL…WSLI), and 72–94 (YFNA…RILV).

The protein belongs to the mitochondrial pyruvate carrier (MPC) (TC 2.A.105) family. In terms of assembly, the functional 150 kDa pyruvate import complex is a heteromer of mpc1 and mpc2.

The protein resides in the mitochondrion inner membrane. Mediates the uptake of pyruvate into mitochondria. This Schizosaccharomyces pombe (strain 972 / ATCC 24843) (Fission yeast) protein is Probable mitochondrial pyruvate carrier 2.